Reading from the N-terminus, the 635-residue chain is Phosphatidylserine decarboxylase proenzyme 3 (635 aa).

Residues Met-1–Ala-42 form a disordered region. Gly-2 carries N-myristoyl glycine lipidation. Over residues Ser-15–Ser-31 the composition is skewed to basic residues. The C2 domain maps to Gln-22–Lys-147. 2 EF-hand domains span residues Ala-180 to Val-210 and Val-211 to Gln-246. 9 residues coordinate Ca(2+): Asp-188, Asp-190, Asp-192, Lys-194, Glu-199, Asp-224, Asn-226, Asp-228, and Glu-235. Active-site charge relay system; for autoendoproteolytic cleavage activity residues include Asp-442, His-498, and Ser-586. Ser-586 serves as the catalytic Schiff-base intermediate with substrate; via pyruvic acid; for decarboxylase activity. Residue Ser-586 is modified to Pyruvic acid (Ser); by autocatalysis.

Belongs to the phosphatidylserine decarboxylase family. PSD-B subfamily. Eukaryotic type II sub-subfamily. In terms of assembly, heterodimer of a large membrane-associated beta subunit and a small pyruvoyl-containing alpha subunit. Pyruvate serves as cofactor. In terms of processing, is synthesized initially as an inactive proenzyme. Formation of the active enzyme involves a self-maturation process in which the active site pyruvoyl group is generated from an internal serine residue via an autocatalytic post-translational modification. Two non-identical subunits are generated from the proenzyme in this reaction, and the pyruvate is formed at the N-terminus of the alpha chain, which is derived from the carboxyl end of the proenzyme. The autoendoproteolytic cleavage occurs by a canonical serine protease mechanism, in which the side chain hydroxyl group of the serine supplies its oxygen atom to form the C-terminus of the beta chain, while the remainder of the serine residue undergoes an oxidative deamination to produce ammonia and the pyruvoyl prosthetic group on the alpha chain. During this reaction, the Ser that is part of the protease active site of the proenzyme becomes the pyruvoyl prosthetic group, which constitutes an essential element of the active site of the mature decarboxylase. In terms of tissue distribution, expressed in roots, leaves, stems and flowers.

The protein resides in the endoplasmic reticulum membrane. It catalyses the reaction a 1,2-diacyl-sn-glycero-3-phospho-L-serine + H(+) = a 1,2-diacyl-sn-glycero-3-phosphoethanolamine + CO2. The protein operates within phospholipid metabolism; phosphatidylethanolamine biosynthesis; phosphatidylethanolamine from CDP-diacylglycerol: step 2/2. In terms of biological role, catalyzes the formation of phosphatidylethanolamine (PtdEtn) from phosphatidylserine (PtdSer). Plays a central role in phospholipid metabolism and in the interorganelle trafficking of phosphatidylserine. Contributes only to a minor proportion of PtdEtn production. In Arabidopsis thaliana (Mouse-ear cress), this protein is Phosphatidylserine decarboxylase proenzyme 3 (PSD3).